The chain runs to 432 residues: Adenylosuccinate synthetase (432 aa).

Residues 13–19 (GDEGKGK) and 41–43 (GHT) contribute to the GTP site. D14 serves as the catalytic Proton acceptor. Residues D14 and G41 each contribute to the Mg(2+) site. IMP contacts are provided by residues 14-17 (DEGK), 39-42 (NAGH), T130, R144, Q225, T240, and R304. The active-site Proton donor is the H42. Position 300–306 (300–306 (ATTGRRR)) interacts with substrate. Residues R306, 332–334 (KLD), and 415–417 (STG) contribute to the GTP site.

The protein belongs to the adenylosuccinate synthetase family. As to quaternary structure, homodimer. Requires Mg(2+) as cofactor.

It localises to the cytoplasm. The catalysed reaction is IMP + L-aspartate + GTP = N(6)-(1,2-dicarboxyethyl)-AMP + GDP + phosphate + 2 H(+). It participates in purine metabolism; AMP biosynthesis via de novo pathway; AMP from IMP: step 1/2. Plays an important role in the de novo pathway of purine nucleotide biosynthesis. Catalyzes the first committed step in the biosynthesis of AMP from IMP. The chain is Adenylosuccinate synthetase from Klebsiella pneumoniae subsp. pneumoniae (strain ATCC 700721 / MGH 78578).